The following is a 93-amino-acid chain: Small ribosomal subunit protein uS19 (93 aa).

This sequence belongs to the universal ribosomal protein uS19 family.

In terms of biological role, protein S19 forms a complex with S13 that binds strongly to the 16S ribosomal RNA. The polypeptide is Small ribosomal subunit protein uS19 (Helicobacter acinonychis (strain Sheeba)).